A 386-amino-acid chain; its full sequence is Phosphoglycerate kinase (386 aa).

Substrate contacts are provided by residues 21–23 (DLN), R36, 59–62 (HLGR), R113, and R146. Residues K197, E313, and 339 to 342 (GGDT) contribute to the ATP site.

It belongs to the phosphoglycerate kinase family. As to quaternary structure, monomer.

It localises to the cytoplasm. It carries out the reaction (2R)-3-phosphoglycerate + ATP = (2R)-3-phospho-glyceroyl phosphate + ADP. It participates in carbohydrate degradation; glycolysis; pyruvate from D-glyceraldehyde 3-phosphate: step 2/5. The protein is Phosphoglycerate kinase of Serratia proteamaculans (strain 568).